An 894-amino-acid chain; its full sequence is Exocyst complex component 1 (894 aa).

Coiled-coil stretches lie at residues 152 to 199 (GDEE…LQVL) and 205 to 259 (QSIM…NHLI). The tract at residues 437–495 (SKESKKFATLPRKESAVKQETESLHGSSGKLTGSTSSLNKLSVQSSGSRRSQSSSLLDM) is disordered. The segment covering 438–459 (KESKKFATLPRKESAVKQETES) has biased composition (basic and acidic residues). The span at 460-491 (LHGSSGKLTGSTSSLNKLSVQSSGSRRSQSSS) shows a compositional bias: low complexity. S470 is modified (phosphoserine). T471 is modified (phosphothreonine). Residues S473, S487, and S501 each carry the phosphoserine modification.

This sequence belongs to the SEC3 family. The exocyst complex is composed of EXOC1, EXOC2, EXOC3, EXOC4, EXOC5, EXOC6, EXOC7 and EXOC8. Interacts with EEF1A1. Interacts with SLC6A9; interaction increases the transporter capacity of SLC6A9 probably by promoting its insertion into the cell membrane.

Its subcellular location is the midbody. It is found in the midbody ring. It localises to the cytoplasm. The protein localises to the perinuclear region. The protein resides in the cell membrane. Component of the exocyst complex involved in the docking of exocytic vesicles with fusion sites on the plasma membrane. The sequence is that of Exocyst complex component 1 (Exoc1) from Mus musculus (Mouse).